A 432-amino-acid polypeptide reads, in one-letter code: Tyrosine-protein phosphatase non-receptor type 1 (432 aa).

Position 1 is an N-acetylmethionine (methionine 1). The 275-residue stretch at 3–277 (MEKEFEEIDK…RFSYLAVIEG (275 aa)) folds into the Tyrosine-protein phosphatase domain. Phosphotyrosine is present on tyrosine 20. Serine 50 carries the phosphoserine; by CLK1, CLK2 and PKB/AKT1 or PKB/AKT2 modification. Position 66 is a phosphotyrosine; by EGFR (tyrosine 66). Substrate contacts are provided by residues aspartate 181 and 215-221 (CSAGIGR). Cysteine 215 acts as the Phosphocysteine intermediate in catalysis. Position 215 is a cysteine persulfide (cysteine 215). The residue at position 215 (cysteine 215) is an S-nitrosocysteine; in reversibly inhibited form. A phosphoserine; by CLK1 and CLK2 mark is found at serine 242 and serine 243. Glutamine 262 contributes to the substrate binding site. 2 disordered regions span residues 297–322 (EDLD…PHNG) and 335–399 (SEET…EEHK). Serine 335, serine 362, and serine 364 each carry phosphoserine. A compositionally biased stretch (low complexity) spans 354–364 (SSAMHSVSSMS). At threonine 367 the chain carries Phosphothreonine.

This sequence belongs to the protein-tyrosine phosphatase family. Non-receptor class 1 subfamily. As to quaternary structure, interacts with EPHA3 (phosphorylated); dephosphorylates EPHA3 and may regulate its trafficking and function. Interacts with MET. Interacts with NCK1. Ser-50 is the major site of phosphorylation as compared to Ser-242 and Ser-243. Activated by phosphorylation at Ser-50. In terms of processing, S-nitrosylation of Cys-215 inactivates the enzyme activity. Post-translationally, sulfhydration at Cys-215 following endoplasmic reticulum stress inactivates the enzyme activity, promoting EIF2AK3/PERK activity. In terms of tissue distribution, most abundant in testis. Also found in kidney, spleen, muscle, liver, heart and brain.

It localises to the endoplasmic reticulum membrane. It carries out the reaction O-phospho-L-tyrosyl-[protein] + H2O = L-tyrosyl-[protein] + phosphate. Functionally, tyrosine-protein phosphatase which acts as a regulator of endoplasmic reticulum unfolded protein response. Mediates dephosphorylation of EIF2AK3/PERK; inactivating the protein kinase activity of EIF2AK3/PERK. May play an important role in CKII- and p60c-src-induced signal transduction cascades. May regulate the EFNA5-EPHA3 signaling pathway which modulates cell reorganization and cell-cell repulsion. May also regulate the hepatocyte growth factor receptor signaling pathway through dephosphorylation of MET. In Mus musculus (Mouse), this protein is Tyrosine-protein phosphatase non-receptor type 1 (Ptpn1).